Consider the following 309-residue polypeptide: Ribonuclease Z (309 aa).

Zn(2+) contacts are provided by His63, His65, Asp67, His68, His145, Asp216, and His274. Asp67 acts as the Proton acceptor in catalysis.

The protein belongs to the RNase Z family. Homodimer. Zn(2+) is required as a cofactor.

The catalysed reaction is Endonucleolytic cleavage of RNA, removing extra 3' nucleotides from tRNA precursor, generating 3' termini of tRNAs. A 3'-hydroxy group is left at the tRNA terminus and a 5'-phosphoryl group is left at the trailer molecule.. Zinc phosphodiesterase, which displays some tRNA 3'-processing endonuclease activity. Probably involved in tRNA maturation, by removing a 3'-trailer from precursor tRNA. The sequence is that of Ribonuclease Z from Streptococcus suis (strain 98HAH33).